Consider the following 167-residue polypeptide: uncharacterized protein (167 aa).

The next 4 helical transmembrane spans lie at Leu13 to Ile33, Val37 to Tyr57, Trp61 to Glu81, and Leu103 to Ser123.

The protein resides in the cell membrane. This is an uncharacterized protein from Haemophilus influenzae (strain ATCC 51907 / DSM 11121 / KW20 / Rd).